Consider the following 261-residue polypeptide: Small ribosomal subunit protein uS2 (261 aa).

Belongs to the universal ribosomal protein uS2 family.

This chain is Small ribosomal subunit protein uS2, found in Paracoccus denitrificans (strain Pd 1222).